The following is a 257-amino-acid chain: Imidazole glycerol phosphate synthase subunit HisF (257 aa).

Residues Asp-11 and Asp-130 contribute to the active site.

Belongs to the HisA/HisF family. Heterodimer of HisH and HisF.

Its subcellular location is the cytoplasm. The enzyme catalyses 5-[(5-phospho-1-deoxy-D-ribulos-1-ylimino)methylamino]-1-(5-phospho-beta-D-ribosyl)imidazole-4-carboxamide + L-glutamine = D-erythro-1-(imidazol-4-yl)glycerol 3-phosphate + 5-amino-1-(5-phospho-beta-D-ribosyl)imidazole-4-carboxamide + L-glutamate + H(+). It participates in amino-acid biosynthesis; L-histidine biosynthesis; L-histidine from 5-phospho-alpha-D-ribose 1-diphosphate: step 5/9. Functionally, IGPS catalyzes the conversion of PRFAR and glutamine to IGP, AICAR and glutamate. The HisF subunit catalyzes the cyclization activity that produces IGP and AICAR from PRFAR using the ammonia provided by the HisH subunit. The polypeptide is Imidazole glycerol phosphate synthase subunit HisF (Vibrio campbellii (strain ATCC BAA-1116)).